A 541-amino-acid polypeptide reads, in one-letter code: Protein wntless homolog (541 aa).

Residues 1–15 (MAGAIIENMSTKKLC) lie on the Cytoplasmic side of the membrane. A helical membrane pass occupies residues 16 to 36 (IVGGILLVFQIIAFLVGGLIA). Residues 37-232 (PGPTTAVSYM…GIHQNGGFTK (196 aa)) are Lumenal-facing. Residues 101-232 (MEMSPWFQFM…GIHQNGGFTK (132 aa)) form an interaction with Wnt proteins region. Residues 233-253 (VWFAMKTFLTPSIFIIMVWYW) traverse the membrane as a helical segment. Residues 254-268 (RRITMMSRPPVLLEK) lie on the Cytoplasmic side of the membrane. Residues 269–289 (VIFALGISMTFINIPVEWFSI) form a helical membrane-spanning segment. The Lumenal segment spans residues 290–303 (GFDWTWMLLFGDIR). Residues 304 to 324 (QGIFYAMLLSFWIIFCGEHMM) form a helical membrane-spanning segment. The Cytoplasmic portion of the chain corresponds to 325–331 (DQHERNH). The helical transmembrane segment at 332–352 (IAGYWKQVGPIAVGSFCLFIF) threads the bilayer. The Lumenal segment spans residues 353–380 (DMCERGVQLTNPFYSIWTTDIGTELAMA). A helical transmembrane segment spans residues 381-401 (FIIVAGICLCLYFLFLCFMVF). The Cytoplasmic segment spans residues 402–431 (QVFRNISGKQSSLPAMSKVRRLHYEGLIFR). The helical transmembrane segment at 432–452 (FKFLMLITLACAAMTVIFFIV) threads the bilayer. The Lumenal segment spans residues 453–471 (SQVTEGHWKWGGVTVQVNS). The chain crosses the membrane as a helical span at residues 472 to 492 (AFFTGIYGMWNLYVFALMFLY). Topologically, residues 493–541 (APSHKNYGEDQSNGDLGVHSGEELQLTTTITHVDGPTEIYKLTRKEAQE) are cytoplasmic.

Belongs to the wntless family. Interacts with WNT3A. Interacts with WNT1, WNT3 and WNT5A. N-glycosylated.

The protein resides in the golgi apparatus membrane. It localises to the cytoplasmic vesicle membrane. The protein localises to the cell membrane. It is found in the endoplasmic reticulum membrane. Its subcellular location is the early endosome membrane. Functionally, regulates Wnt proteins sorting and secretion in a feedback regulatory mechanism. This reciprocal interaction plays a key role in the regulation of expression, subcellular location, binding and organelle-specific association of Wnt proteins. Plays also an important role in establishment of the anterior-posterior body axis formation during development. The chain is Protein wntless homolog (WLS) from Homo sapiens (Human).